The sequence spans 447 residues: Tubulin beta-2 chain (447 aa).

The GTP site is built by glutamine 11, glutamate 69, serine 138, glycine 142, threonine 143, glycine 144, asparagine 204, and asparagine 226. Glutamate 69 lines the Mg(2+) pocket. Positions 426–447 (QDAGVDEEEEEYEDDAPLEEEV) are disordered. The span at 429 to 447 (GVDEEEEEYEDDAPLEEEV) shows a compositional bias: acidic residues.

This sequence belongs to the tubulin family. In terms of assembly, dimer of alpha and beta chains. A typical microtubule is a hollow water-filled tube with an outer diameter of 25 nm and an inner diameter of 15 nM. Alpha-beta heterodimers associate head-to-tail to form protofilaments running lengthwise along the microtubule wall with the beta-tubulin subunit facing the microtubule plus end conferring a structural polarity. Microtubules usually have 13 protofilaments but different protofilament numbers can be found in some organisms and specialized cells. It depends on Mg(2+) as a cofactor.

Its subcellular location is the cytoplasm. The protein localises to the cytoskeleton. Functionally, tubulin is the major constituent of microtubules, a cylinder consisting of laterally associated linear protofilaments composed of alpha- and beta-tubulin heterodimers. Microtubules grow by the addition of GTP-tubulin dimers to the microtubule end, where a stabilizing cap forms. Below the cap, tubulin dimers are in GDP-bound state, owing to GTPase activity of alpha-tubulin. This chain is Tubulin beta-2 chain (TUB2), found in Colletotrichum graminicola (Maize anthracnose fungus).